Consider the following 709-residue polypeptide: Ribosomal RNA large subunit methyltransferase K/L (709 aa).

Residues 43–154 (LAYRITLWTR…NGVITIAMNF (112 aa)) enclose the THUMP domain.

This sequence belongs to the methyltransferase superfamily. RlmKL family.

The protein resides in the cytoplasm. It carries out the reaction guanosine(2445) in 23S rRNA + S-adenosyl-L-methionine = N(2)-methylguanosine(2445) in 23S rRNA + S-adenosyl-L-homocysteine + H(+). The enzyme catalyses guanosine(2069) in 23S rRNA + S-adenosyl-L-methionine = N(2)-methylguanosine(2069) in 23S rRNA + S-adenosyl-L-homocysteine + H(+). Functionally, specifically methylates the guanine in position 2445 (m2G2445) and the guanine in position 2069 (m7G2069) of 23S rRNA. This chain is Ribosomal RNA large subunit methyltransferase K/L, found in Shewanella baltica (strain OS155 / ATCC BAA-1091).